A 352-amino-acid chain; its full sequence is Sperm equatorial segment protein 1 (352 aa).

Residues 1-19 form the signal peptide; that stretch reads MKSLVLLVALLLWSSSVPA. A glycan (N-linked (GlcNAc...) asparagine) is linked at Asn128. Residues 140-203 form a disordered region; the sequence is IEKEEPEPEP…TESEDVPQLS (64 aa). The span at 166-193 shows a compositional bias: polar residues; the sequence is TESSTSPYVTSYKSPVTTSDRSTGIEIS.

This sequence belongs to the SPESP1 family. Glycosylated. In testis there are two predominant forms of 77- and 67-kDa and a form of 47-kDa, whereas in epididymal sperm from caput, corpus, and cauda there are two forms of 47- and 43-kDa. Testis forms contain complex carbohydrate residues. Epididymal sperm forms are N-glycosylated. Then undergoes significant glycosylation in the testis and that the majority of these glycoconjugates are removed by the time sperm reach the caput epididymis.

It localises to the cytoplasmic vesicle. The protein resides in the secretory vesicle. The protein localises to the acrosome. In terms of biological role, involved in fertilization ability of sperm. This is Sperm equatorial segment protein 1 from Macaca fascicularis (Crab-eating macaque).